Reading from the N-terminus, the 402-residue chain is S-adenosylmethionine synthase (402 aa).

Residue 137 to 142 (GQGSAD) participates in ATP binding.

Belongs to the AdoMet synthase 2 family. Mg(2+) is required as a cofactor.

The enzyme catalyses L-methionine + ATP + H2O = S-adenosyl-L-methionine + phosphate + diphosphate. It participates in amino-acid biosynthesis; S-adenosyl-L-methionine biosynthesis; S-adenosyl-L-methionine from L-methionine: step 1/1. Functionally, catalyzes the formation of S-adenosylmethionine from methionine and ATP. The protein is S-adenosylmethionine synthase of Pyrobaculum islandicum (strain DSM 4184 / JCM 9189 / GEO3).